The primary structure comprises 497 residues: Vacuolar fusion protein CCZ1 homolog B (497 aa).

Residues 244 to 284 form a disordered region; it reads GTSSWSYLRKGSGSPQISSRSTTVPPLGSGGTLPSGNGSST.

It belongs to the CCZ1 family. In terms of assembly, interacts with MON1.

The protein localises to the endosome. The protein resides in the prevacuolar compartment. Plays an important role in membrane trafficking through the secretory apparatus. In complex with MON1, acts as a guanine exchange factor (GEF) for RABG3F of the RAB7 protein family. Promotes the exchange of GDP to GTP, converting RABG3F from an inactive GDP-bound form into an active GTP-bound form. The RABG3F active form is involved in protein trafficking from prevacuolar compartments (PVCs) to vacuoles. May serve as a linker between Rab5 and Rab7 protein families in PVCs and mediate PVC maturation. This is Vacuolar fusion protein CCZ1 homolog B from Arabidopsis thaliana (Mouse-ear cress).